A 186-amino-acid chain; its full sequence is Dihydrofolate reductase (186 aa).

The DHFR domain occupies 2-180 (RLNVVVAVSE…FTFKFCVYDV (179 aa)). Residues A8 and 14-20 (GIGKGGG) each bind NADP(+). Residue 28–33 (DMEFFK) participates in substrate binding. 51–53 (RVT) is a binding site for NADP(+). Substrate is bound at residue R67. Residues 73-75 (SST) and 112-119 (GGYRLYKE) contribute to the NADP(+) site.

This sequence belongs to the dihydrofolate reductase family. Monomer.

The catalysed reaction is (6S)-5,6,7,8-tetrahydrofolate + NADP(+) = 7,8-dihydrofolate + NADPH + H(+). The protein operates within cofactor biosynthesis; tetrahydrofolate biosynthesis; 5,6,7,8-tetrahydrofolate from 7,8-dihydrofolate: step 1/1. Functionally, key enzyme in folate metabolism. Contributes to the de novo mitochondrial thymidylate biosynthesis pathway. Catalyzes an essential reaction for de novo glycine and purine synthesis, and for DNA precursor synthesis. The protein is Dihydrofolate reductase of Schistosoma mansoni (Blood fluke).